Reading from the N-terminus, the 621-residue chain is DnaJ homolog subfamily C member 2 (621 aa).

Methionine 1 bears the N-acetylmethionine mark. Residues serine 47, serine 49, serine 60, and serine 63 each carry the phosphoserine modification. In terms of domain architecture, J spans 88 to 161; the sequence is DHYAVLGLGH…VKRRAFNSVD (74 aa). A ZRF1-UBD region spans residues 160–250; that stretch reads VDPTFDNSVP…RDERKWIEKQ (91 aa). A Phosphoserine modification is found at serine 183. 2 disordered regions span residues 287-312 and 426-453; these read GKAK…KEKQ and KEEA…GSKN. SANT domains follow at residues 449–511 and 549–604; these read SGSK…KLDP and IDSI…EMVK.

In terms of assembly, component of ribosome-associated complex (RAC), a heterodimer composed of Hsp70/DnaK-type chaperone HSPA14 and Hsp40/DnaJ-type chaperone DNAJC2. Interacts (via ZRF1-UBD region) with ID1. Post-translationally, phosphorylated in M (mitotic) phase.

The protein localises to the nucleus. It is found in the cytoplasm. Its subcellular location is the cytosol. In terms of biological role, acts both as a chaperone in the cytosol and as a chromatin regulator in the nucleus. When cytosolic, acts as a molecular chaperone: component of the ribosome-associated complex (RAC), a complex involved in folding or maintaining nascent polypeptides in a folding-competent state. In the RAC complex, stimulates the ATPase activity of the ribosome-associated pool of Hsp70-type chaperones HSPA14 that bind to the nascent polypeptide chain. When nuclear, mediates the switching from polycomb-repressed genes to an active state: specifically recruited at histone H2A ubiquitinated at 'Lys-119' (H2AK119ub), and promotes the displacement of the polycomb PRC1 complex from chromatin, thereby facilitating transcription activation. The protein is DnaJ homolog subfamily C member 2 (Dnajc2) of Rattus norvegicus (Rat).